The following is a 62-amino-acid chain: Large ribosomal subunit protein bL32 (62 aa).

The interval 28-62 is disordered; it reads SIEPTTGEVHRRHHISPDGFYRGRQVIKAKEQDEE.

Belongs to the bacterial ribosomal protein bL32 family.

In Thioalkalivibrio sulfidiphilus (strain HL-EbGR7), this protein is Large ribosomal subunit protein bL32.